The primary structure comprises 384 residues: S-adenosylmethionine synthase (384 aa).

His-15 serves as a coordination point for ATP. Mg(2+) is bound at residue Asp-17. A K(+)-binding site is contributed by Glu-43. Glu-56 and Gln-99 together coordinate L-methionine. The interval 99 to 109 (QSSDINQGVDR) is flexible loop. ATP-binding positions include 164-166 (DAK), 230-231 (RF), Asp-239, 245-246 (RK), Ala-262, and Lys-266. Asp-239 contacts L-methionine. An L-methionine-binding site is contributed by Lys-270.

This sequence belongs to the AdoMet synthase family. As to quaternary structure, homotetramer; dimer of dimers. Requires Mg(2+) as cofactor. K(+) is required as a cofactor.

It localises to the cytoplasm. The catalysed reaction is L-methionine + ATP + H2O = S-adenosyl-L-methionine + phosphate + diphosphate. Its pathway is amino-acid biosynthesis; S-adenosyl-L-methionine biosynthesis; S-adenosyl-L-methionine from L-methionine: step 1/1. Functionally, catalyzes the formation of S-adenosylmethionine (AdoMet) from methionine and ATP. The overall synthetic reaction is composed of two sequential steps, AdoMet formation and the subsequent tripolyphosphate hydrolysis which occurs prior to release of AdoMet from the enzyme. This chain is S-adenosylmethionine synthase, found in Histophilus somni (strain 129Pt) (Haemophilus somnus).